We begin with the raw amino-acid sequence, 4239 residues long: Tenellin synthetase (4239 aa).

Residues 15 to 454 (SEPIAIIGSA…GTNAHAIIER (440 aa)) enclose the Ketosynthase family 3 (KS3) domain. Residues C189, H326, and H374 each act as for beta-ketoacyl synthase activity in the active site. Residues 589–923 (VFTGQGAQWP…ANDAVAFSTA (335 aa)) are malonyl-CoA:ACP transacylase (MAT) domain. Residues 993-1135 (HELLGRRTPD…GRIAVQLGAK (143 aa)) form an N-terminal hotdog fold region. Positions 993 to 1310 (HELLGRRTPD…GFEVRAVGEP (318 aa)) are dehydratase (DH) domain. Positions 993–1313 (HELLGRRTPD…VRAVGEPDAS (321 aa)) constitute a PKS/mFAS DH domain. The active-site Proton acceptor; for dehydratase activity is H1025. The interval 1158–1313 (LQQLDCEKLY…VRAVGEPDAS (156 aa)) is C-terminal hotdog fold. Catalysis depends on D1217, which acts as the Proton donor; for dehydratase activity. Positions 1459–1652 (RLYTEDKGMH…FSGVDHIVHD (194 aa)) are methyltransferase (MT) domain. The segment at 2209-2382 (TYLMVGAAGG…AASIIHVGHV (174 aa)) is ketoreductase (KR) domain. The Carrier 1 domain maps to 2502–2582 (EAAVAALKGF…QLSALAAKLA (81 aa)). S2542 bears the O-(pantetheine 4'-phosphoryl)serine mark. Disordered regions lie at residues 2587–2629 (KKRA…EIAQ) and 2642–2712 (LEAS…FFTQ). 2 stretches are compositionally biased toward polar residues: residues 2648–2662 (GGSSTANLTTSSSVS) and 2670–2681 (ESTLQSSDNNGE). A compositionally biased stretch (low complexity) spans 2682-2698 (STPSKSSNCNSDSGSDN). Positions 2723 to 3169 (REAPMSPAQS…SAQSVGDCVV (447 aa)) are condensation (C) domain. Residues 3203–3614 (CQQHSTKSAI…DGTLLCFGRI (412 aa)) form an adenylation (A) (KR) domain region. Positions 3728 to 3752 (EAAAATSPSNNNINNNTPSGGGGEK) are disordered. Residues 3729–3745 (AAAATSPSNNNINNNTP) show a composition bias toward low complexity. The region spanning 3751-3835 (EKMTVRQGEL…GMARCVAEQR (85 aa)) is the Carrier 2 domain. An O-(pantetheine 4'-phosphoryl)serine modification is found at S3795. Positions 3862–3892 (EKLQHSSASSSSSSSSSSSAGSSSTQRPRKT) are disordered. Residues 3867–3885 (SSASSSSSSSSSSSAGSSS) show a composition bias toward low complexity. Residues 3899–4145 (LTGATGFLGG…LDFGQVDKVV (247 aa)) form a reductase (RED) domain region.

It in the C-terminal section; belongs to the NRP synthetase family.

Its pathway is secondary metabolite biosynthesis. Hybrid PKS-NRPS synthetase; part of the gene cluster that mediates the biosynthesis of tenellin-type 2-pyridones, iron-chelating compounds involved in iron stress tolerance, competition with the natural competitor fungus Metarhizium robertsii and insect hosts infection. TenS catalyzes the assembly of the polyketide-amino acid backbone. Because tenS lacks a designated enoylreductase (ER) domain, the required activity is provided the enoyl reductase tenC. Upon formation of the polyketide backbone on the thiotemplate, the triketide is transferred to the NRPS module and linked to tyrosine to produce the pyrrolidine-2-dione intermediates, including pretellinin A, 11-hydropretellenin A, 12-hydropretellenin A, 13-hydropretellenin A, 14-hydropretellenin A, 12-oxopretellenin A and prototellinin D. The pathway begins with the assembly of the polyketide-amino acid backbone by the hybrid PKS-NRPS tenS with the help of the enoyl reductase tenC. These enzymes catalyze the synthesis of the pyrrolidine-2-dione intermediates pretellinin A, 11-hydropretellenin A, 12-hydropretellenin A, 13-hydropretellenin A, 14-hydropretellenin A, 12-oxopretellenin A and prototellinin D. The cytochrome P450 monooxygenase tenA then catalyzes an oxidative ring expansion of pretenellin A and 14-hydropretellenin A to form the 2-pyridone core, leading to pretenellin B and pyridovericin, respectively. The cytochrome P450 monooxygenase tenB is then required for the selective N-hydroxylation of the 2-pyridone nitrogen of yield tellinin and 15-hydroxytellenin (15-HT), respectively. The UDP-glucosyltransferase GT1 and the methyltransferase MT1, located outside the tenS gene cluster, contribute to the stepwise glycosylation and methylation of 15-HT to obtain the glycoside pyridovericin-N-O-(4-O-methyl-beta-D-glucopyranoside) (PMGP). Additional related compounds such as 1-O-methyl-15-HT, (8Z)-1-O-methyl-15-HT, and O-methyltenellin A are also produced but the enzymes involved in their biosynthesis have still to be determined. This is Tenellin synthetase from Beauveria bassiana (White muscardine disease fungus).